We begin with the raw amino-acid sequence, 649 residues long: UvrABC system protein C (649 aa).

The GIY-YIG domain maps to 12 to 91; the sequence is SSPGVYLMKS…IKQHRPKYNI (80 aa). Residues 201-236 form the UVR domain; the sequence is NEVARLYRSKMNLASEQMRYEDAARYRDLLRAIEVT. Residues 603–649 are disordered; it reads RLHGGPLPNPPPPGEGAMGDGSIPSPRNGVMDDSIPSPSGRGWPKAG.

It belongs to the UvrC family. As to quaternary structure, interacts with UvrB in an incision complex.

The protein resides in the cytoplasm. In terms of biological role, the UvrABC repair system catalyzes the recognition and processing of DNA lesions. UvrC both incises the 5' and 3' sides of the lesion. The N-terminal half is responsible for the 3' incision and the C-terminal half is responsible for the 5' incision. This Geobacter sp. (strain M21) protein is UvrABC system protein C.